The primary structure comprises 353 residues: Melatonin receptor type 1A (353 aa).

Positions 1 to 26 are disordered; the sequence is MRANGSELNGTVLPRDPPAEGSPRRP. Residues 1–32 lie on the Extracellular side of the membrane; that stretch reads MRANGSELNGTVLPRDPPAEGSPRRPPWVTST. N-linked (GlcNAc...) asparagine glycosylation is found at Asn-4 and Asn-9. Residues 33–53 form a helical membrane-spanning segment; that stretch reads LATILIFTIVVDLLGNLLVIL. Residues 54 to 66 lie on the Cytoplasmic side of the membrane; it reads SVYRNKKLRNAGN. The chain crosses the membrane as a helical span at residues 67–87; that stretch reads IFVVSLAIADLVVAIYPYPLV. Over 88-105 the chain is Extracellular; the sequence is LTSVFHNGWNLGYLHCQI. A disulfide bridge connects residues Cys-103 and Cys-180. A helical membrane pass occupies residues 106 to 126; it reads SGFLMGLSVIGSIFNITGIAI. Residues 127 to 145 lie on the Cytoplasmic side of the membrane; sequence NRYCYICHSLKYDKLYSDK. Residues 146 to 166 form a helical membrane-spanning segment; that stretch reads NSLCYVGLIWVLTVVAIVPNL. Residues 167 to 190 lie on the Extracellular side of the membrane; it reads FVGSLQYDPRIYSCTFAQSVSSAY. The chain crosses the membrane as a helical span at residues 191-211; the sequence is TIAVVFFHFILPIAIVTYCYL. Topologically, residues 212-243 are cytoplasmic; sequence RIWILVIQVRRRVKPDNNPRLKPHDFRNFVTM. Residues 244–264 traverse the membrane as a helical segment; it reads FVVFVLFAVCWAPLNFIGLAV. Over 265–277 the chain is Extracellular; that stretch reads AVDPETIIPRIPE. A helical membrane pass occupies residues 278–298; the sequence is WLFVSSYYMAYFNSCLNAIIY. Over 299-353 the chain is Cytoplasmic; it reads GLLNQNFRREYKKIVVSFCTAKAFFQDSSNDAADRIRSKPSPLITNNNQVKVDSV.

The protein belongs to the G-protein coupled receptor 1 family. Expressed in optic tectum and retina, less in neostriatum, hypothalamus and thalamus.

The protein localises to the cell membrane. In terms of biological role, high affinity receptor for melatonin. The activity of this receptor is mediated by pertussis toxin sensitive G proteins that inhibits adenylate cyclase activity. This is Melatonin receptor type 1A from Gallus gallus (Chicken).